Here is a 219-residue protein sequence, read N- to C-terminus: 7-cyano-7-deazaguanine synthase (219 aa).

10 to 20 is a binding site for ATP; the sequence is FSGGQDSTTCL. Zn(2+)-binding residues include Cys-188, Cys-196, Cys-199, and Cys-202.

This sequence belongs to the QueC family. It depends on Zn(2+) as a cofactor.

It carries out the reaction 7-carboxy-7-deazaguanine + NH4(+) + ATP = 7-cyano-7-deazaguanine + ADP + phosphate + H2O + H(+). The protein operates within purine metabolism; 7-cyano-7-deazaguanine biosynthesis. Catalyzes the ATP-dependent conversion of 7-carboxy-7-deazaguanine (CDG) to 7-cyano-7-deazaguanine (preQ(0)). This Neisseria meningitidis serogroup B (strain ATCC BAA-335 / MC58) protein is 7-cyano-7-deazaguanine synthase.